Consider the following 199-residue polypeptide: Inner membrane protein E199L (199 aa).

A glycan (N-linked (GlcNAc...) asparagine; by host) is linked at N131. Residues 150 to 170 form a helical membrane-spanning segment; the sequence is INVMNHPFLTLILIILILVII.

It belongs to the asfivirus E199L family. As to quaternary structure, interacts with host PYCR2; this interaction results in autophagy activation.

It localises to the virion membrane. It is found in the host membrane. Essential for viral fusion with host endosomal membrane and core release. Not required for virus morphogenesis and egress. Induces complete autophagy through the interaction with and down-regulation of host PYCR2. The sequence is that of Inner membrane protein E199L from African swine fever virus (isolate Pig/Kenya/KEN-50/1950) (ASFV).